The chain runs to 94 residues: Small ribosomal subunit protein bS6 (94 aa).

It belongs to the bacterial ribosomal protein bS6 family.

Functionally, binds together with bS18 to 16S ribosomal RNA. The protein is Small ribosomal subunit protein bS6 of Clostridium botulinum (strain 657 / Type Ba4).